A 428-amino-acid polypeptide reads, in one-letter code: Histone deacetylase 3 (428 aa).

The interval 3–316 (KTVAYFYDPD…WTYETSLLVE (314 aa)) is histone deacetylase. Residues His-17, Gly-21, and Lys-25 each coordinate 1D-myo-inositol 1,4,5,6-tetrakisphosphate. His-135 is an active-site residue. Zn(2+) contacts are provided by Asp-170, His-172, and Asp-259. Arg-265 contacts 1D-myo-inositol 1,4,5,6-tetrakisphosphate. 2 stretches are compositionally biased toward basic and acidic residues: residues 388 to 405 (DRTD…ENYS) and 415 to 428 (DGDH…DVEI). The tract at residues 388–428 (DRTDEADAEERGPEENYSRPEAPNEFYDGDHDNDKESDVEI) is disordered. The residue at position 424 (Ser-424) is a Phosphoserine.

This sequence belongs to the histone deacetylase family. HD type 1 subfamily. Interacts with HDAC7 and HDAC9. Interacts with HDAC10, DAXX and DACH1. Found in a complex with NCOR1 and NCOR2. Component of the N-Cor repressor complex, at least composed of NCOR1, NCOR2, HDAC3, TBL1X, TBL1R, CORO2A and GPS2. Interacts with BCOR, MJD2A/JHDM3A, NRIP1, PRDM6 and SRY. Interacts with BTBD14B. Interacts with GLIS2. Interacts (via the DNA-binding domain) with NR2C1; the interaction recruits phosphorylated NR2C1 to PML bodies for sumoylation. Component of the Notch corepressor complex. Interacts with CBFA2T3 and NKAP. Interacts with APEX1; the interaction is not dependent on the acetylated status of APEX1. Interacts with and deacetylates MAPK14. Interacts with ZMYND15. Interacts with SMRT/NCOR2 and BCL6 on DNA enhancer elements. Interacts with INSM1. Interacts with XBP1; the interaction occurs in endothelial cell (EC) under disturbed flow. Interacts (via C-terminus) with CCAR2 (via N-terminus). Interacts with and deacetylates MEF2D. Interacts with BEND3. Interacts with NKAPL. Interacts with DHX36; this interaction occurs in a RNA-dependent manner. Interacts weakly with CRY1; this interaction is enhanced in the presence of FBXL3. Interacts with FBXL3 and BMAL1. Interacts with NCOR1. Interacts with RARA. Interacts with SETD5. Post-translationally, deubiquitinated on 'Lys-63'-linked ubiquitin chains by USP38; leading to a decreased level of histone acetylation. Sumoylated in vitro.

Its subcellular location is the nucleus. The protein localises to the chromosome. It is found in the cytoplasm. It localises to the cytosol. The catalysed reaction is N(6)-acetyl-L-lysyl-[histone] + H2O = L-lysyl-[histone] + acetate. The enzyme catalyses N(6)-acetyl-L-lysyl-[protein] + H2O = L-lysyl-[protein] + acetate. It catalyses the reaction N(6)-(2E)-butenoyl-L-lysyl-[protein] + H2O = (2E)-2-butenoate + L-lysyl-[protein]. It carries out the reaction N(6)-(2-hydroxyisobutanoyl)-L-lysyl-[protein] + H2O = 2-hydroxy-2-methylpropanoate + L-lysyl-[protein]. The catalysed reaction is N(6)-[(S)-lactoyl]-L-lysyl-[protein] + H2O = (S)-lactate + L-lysyl-[protein]. Inositol tetraphosphate (1D-myo-inositol 1,4,5,6-tetrakisphosphate) promotes the histone deacetylase activity by acting as an intermolecular glue between HDAC3 and NCOR2, thereby promoting its association with the N-Cor complex, a prerequisite for the histone deacetylase activity. In terms of biological role, histone deacetylase that catalyzes the deacetylation of lysine residues on the N-terminal part of the core histones (H2A, H2B, H3 and H4), and some other non-histone substrates. Histone deacetylation gives a tag for epigenetic repression and plays an important role in transcriptional regulation, cell cycle progression and developmental events. Histone deacetylases act via the formation of large multiprotein complexes, such as N-Cor repressor complex, which activate the histone deacetylase activity. Participates in the BCL6 transcriptional repressor activity by deacetylating the H3 'Lys-27' (H3K27) on enhancer elements, antagonizing EP300 acetyltransferase activity and repressing proximal gene expression. Acts as a molecular chaperone for shuttling phosphorylated NR2C1 to PML bodies for sumoylation. Contributes, together with XBP1 isoform 1, to the activation of NFE2L2-mediated HMOX1 transcription factor gene expression in a PI(3)K/mTORC2/Akt-dependent signaling pathway leading to endothelial cell (EC) survival under disturbed flow/oxidative stress. Regulates both the transcriptional activation and repression phases of the circadian clock in a deacetylase activity-independent manner. During the activation phase, promotes the accumulation of ubiquitinated BMAL1 at the E-boxes and during the repression phase, blocks FBXL3-mediated CRY1/2 ubiquitination and promotes the interaction of CRY1 and BMAL1. The NCOR1-HDAC3 complex regulates the circadian expression of the core clock gene BMAL1 and the genes involved in lipid metabolism in the liver. Also functions as a deacetylase for non-histone targets, such as KAT5, MEF2D, MAPK14, RARA and STAT3. Serves as a corepressor of RARA, mediating its deacetylation and repression, leading to inhibition of RARE DNA element binding. In association with RARA, plays a role in the repression of microRNA-10a and thereby in the inflammatory response. In addition to protein deacetylase activity, also acts as a protein-lysine deacylase by recognizing other acyl groups: catalyzes removal of (2E)-butenoyl (crotonyl), lactoyl (lactyl) and 2-hydroxyisobutanoyl (2-hydroxyisobutyryl) acyl groups from lysine residues, leading to protein decrotonylation, delactylation and de-2-hydroxyisobutyrylation, respectively. Catalyzes decrotonylation of MAPRE1/EB1. Mediates delactylation NBN/NBS1, thereby inhibiting DNA double-strand breaks (DSBs) via homologous recombination (HR). The sequence is that of Histone deacetylase 3 (HDAC3) from Pongo abelii (Sumatran orangutan).